The chain runs to 342 residues: Large ribosomal subunit protein uL3 (342 aa).

This sequence belongs to the universal ribosomal protein uL3 family. Part of the 50S ribosomal subunit. Forms a cluster with proteins L14 and L24e.

In terms of biological role, one of the primary rRNA binding proteins, it binds directly near the 3'-end of the 23S rRNA, where it nucleates assembly of the 50S subunit. The protein is Large ribosomal subunit protein uL3 of Pyrobaculum islandicum (strain DSM 4184 / JCM 9189 / GEO3).